Reading from the N-terminus, the 190-residue chain is Heme-binding protein 1 (190 aa).

This sequence belongs to the HEBP family. As to quaternary structure, monomer. As to expression, ubiquitously expressed. Extremely abundant in liver.

It localises to the cytoplasm. Functionally, may bind free porphyrinogens that may be present in the cell and thus facilitate removal of these potentially toxic compound. Binds with a high affinity to one molecule of heme or porphyrins. It binds metalloporphyrins, free porphyrins and N-methylprotoporphyrin with similar affinities. This Mus musculus (Mouse) protein is Heme-binding protein 1 (Hebp1).